The following is a 187-amino-acid chain: RNA pyrophosphohydrolase (187 aa).

The region spanning 6 to 149 (GYRANVGIIL…KRQVYRLALT (144 aa)) is the Nudix hydrolase domain. Positions 38 to 59 (GGIKSGETPTQAMYRELAEETG) match the Nudix box motif.

Belongs to the Nudix hydrolase family. RppH subfamily. Requires a divalent metal cation as cofactor.

Its function is as follows. Accelerates the degradation of transcripts by removing pyrophosphate from the 5'-end of triphosphorylated RNA, leading to a more labile monophosphorylated state that can stimulate subsequent ribonuclease cleavage. In Nitrosomonas eutropha (strain DSM 101675 / C91 / Nm57), this protein is RNA pyrophosphohydrolase.